The primary structure comprises 170 residues: Translationally-controlled tumor protein homolog (170 aa).

Residues 1–170 (MLIYNDILNG…WKHGLKETKV (170 aa)) form the TCTP domain.

This sequence belongs to the TCTP family.

The protein localises to the cytoplasm. It localises to the cytoskeleton. In terms of biological role, involved in protein synthesis. Involved in microtubule stabilization. This Gibberella zeae (strain ATCC MYA-4620 / CBS 123657 / FGSC 9075 / NRRL 31084 / PH-1) (Wheat head blight fungus) protein is Translationally-controlled tumor protein homolog.